The chain runs to 199 residues: Ribonuclease HII (199 aa).

Residues 14 to 199 enclose the RNase H type-2 domain; the sequence is GLLAGVDEAG…SFAPVAEVLR (186 aa). Positions 20, 21, and 112 each coordinate a divalent metal cation.

Belongs to the RNase HII family. Requires Mn(2+) as cofactor. Mg(2+) is required as a cofactor.

The protein localises to the cytoplasm. It carries out the reaction Endonucleolytic cleavage to 5'-phosphomonoester.. In terms of biological role, endonuclease that specifically degrades the RNA of RNA-DNA hybrids. This is Ribonuclease HII from Polaromonas sp. (strain JS666 / ATCC BAA-500).